The following is a 603-amino-acid chain: MSNELDFRSVRLLKNDPVSFQKFPYSNEDEAWKTYLENPLTAATKAMMRVNGDEESVAALSFLYDYYMGPKEKRILSSSTGGRNDQGKKFYHSMDYEPDLAPLESPTHLMKFLTENVSGSPDYTDQLKKNNLLGLEGVLPTPGKTNTVPPGPSKLEASSMDSYLLPASDIYDNGSLNSLFESIHGVPPTQRWQPDSTFKDDPQESLLFPDILKTSPDPPCPEDYPGLKSDFEYTLGSPKAIHIKAGESPMAYLNKGQFYPVTLRTPAGGKGLALSSSKVKSVVMVVFDNDKVPVEQLRFWRHWHSRQPTAKQRVIDVADCKENFNTVQHIEEVAYNALSFVWNVNEEAKVFIGVNCLSTDFSSQKGVKGVPLNLQIDTYDCGAGTERLVHRAVCQIKIFCDKGAERKMRDDERKQFRRKVKCPDSSNNAGIKGCLLSGFRGNETTYLRPETDLETQPVLFIPNLHFSSLQRPGGVVPSAGHSSSDRLPLKRTCSPFAEEFEPLPSKQAKEDDLQRVLLYVRRETEEVFDALMLKTPDLKGLRNAISEKYGLPEENICKVYKKCKRGILVNMDNNIIQHYSNHVAFLLDMGELDGKIQIILKEL.

The segment at 30-95 (EAWKTYLENP…QGKKFYHSMD (66 aa)) is transcription activation. The Grh/CP2 DB domain occupies 226–461 (GLKSDFEYTL…DLETQPVLFI (236 aa)).

This sequence belongs to the grh/CP2 family. Grainyhead subfamily. In terms of assembly, homodimer, also forms heterodimers with GRHL1 and GRHL2. Interacts with LMO4.

It is found in the nucleus. Its function is as follows. Transcription factor playing important roles in primary neurulation and in the differentiation of stratified epithelia of both ectodermal and endodermal origin. Binds directly to the consensus DNA sequence 5'-AACCGGTT-3' acting as an activator and repressor on distinct target genes. Essential for epidermal differentiation and barrier formation at the end of embryogenesis with TGM3 as critical direct target. Exhibits functional redundancy with GRHL2 in epidermal morphogenetic events such as eyelid fusion and epidermal wound repair. Despite being dispensable during normal epidermal homeostasis in the adulthood, is again required for barrier repair after immune-mediated epidermal damage, regulates distinct gene batteries in embryonic epidermal differentiation and adult epidermal barrier reformation after injury. Plays unique and cooperative roles with GRHL2 in establishing distinct zones of primary neurulation. Essential for spinal closure, functions cooperatively with GRHL2 in closure 2 (forebrain/midbrain boundary) and posterior neuropore closure. Also required for proper development of the oral periderm. No genetic interaction with GRHL1, no functional cooperativity due to diverse target gene selectivity. The polypeptide is Grainyhead-like protein 3 homolog (Mus musculus (Mouse)).